Consider the following 314-residue polypeptide: 4-hydroxyproline 2-epimerase (314 aa).

The Proton acceptor role is filled by Cys-88. Substrate is bound by residues 89–90 (GH), His-208, and Asp-232. Catalysis depends on Cys-236, which acts as the Proton donor. A substrate-binding site is contributed by 237–238 (GT).

This sequence belongs to the proline racemase family. Homodimer.

The catalysed reaction is trans-4-hydroxy-L-proline = cis-4-hydroxy-D-proline. With respect to regulation, inhibited by iodoacetate, iodoacetamide and by high amounts (10 mM) of pyrrole-2-carboxylate (PYC). Not inhibited by PYC at 1 mM. Allows intracellular utilization of 4-hydroxyproline, one of the major constituents of host collagen, by converting trans-4-hydroxy-L-proline (t4LHyp) to cis-4-hydroxy-D-proline (c4DHyp), which can be further metabolized by intracellular 4-hydroxy-D-proline oxidases. Strong B-cell mitogen. Plays an important role in the regulation of intra- and extracellular amino acid pools, allowing the bacterium to profit from host precursors and enzymatic pathways. Cannot use L-proline, trans-3-hydroxy-L-proline (t3LHyp) and pyrrolidone-5-carboxylate (P5C) as substrate. This is 4-hydroxyproline 2-epimerase from Pseudomonas aeruginosa (strain ATCC 15692 / DSM 22644 / CIP 104116 / JCM 14847 / LMG 12228 / 1C / PRS 101 / PAO1).